A 260-amino-acid polypeptide reads, in one-letter code: NAD kinase (260 aa).

The active-site Proton acceptor is Asp-49. Residues Asp-49–Gly-50, Asn-119–Glu-120, Asp-149, Ala-157, and Thr-160–Ser-165 each bind NAD(+).

It belongs to the NAD kinase family. A divalent metal cation serves as cofactor.

The protein resides in the cytoplasm. The catalysed reaction is NAD(+) + ATP = ADP + NADP(+) + H(+). Its function is as follows. Involved in the regulation of the intracellular balance of NAD and NADP, and is a key enzyme in the biosynthesis of NADP. Catalyzes specifically the phosphorylation on 2'-hydroxyl of the adenosine moiety of NAD to yield NADP. The protein is NAD kinase of Caulobacter vibrioides (strain ATCC 19089 / CIP 103742 / CB 15) (Caulobacter crescentus).